We begin with the raw amino-acid sequence, 391 residues long: Probable tRNA sulfurtransferase (391 aa).

The THUMP domain occupies 60–167; that stretch reads DETVAALQRV…NKAYVYSNTL (108 aa). Residues 184 to 185, 209 to 210, Arg266, Gly288, and Gln297 each bind ATP; these read LL and YF.

The protein belongs to the ThiI family.

The protein resides in the cytoplasm. It carries out the reaction [ThiI sulfur-carrier protein]-S-sulfanyl-L-cysteine + a uridine in tRNA + 2 reduced [2Fe-2S]-[ferredoxin] + ATP + H(+) = [ThiI sulfur-carrier protein]-L-cysteine + a 4-thiouridine in tRNA + 2 oxidized [2Fe-2S]-[ferredoxin] + AMP + diphosphate. The enzyme catalyses [ThiS sulfur-carrier protein]-C-terminal Gly-Gly-AMP + S-sulfanyl-L-cysteinyl-[cysteine desulfurase] + AH2 = [ThiS sulfur-carrier protein]-C-terminal-Gly-aminoethanethioate + L-cysteinyl-[cysteine desulfurase] + A + AMP + 2 H(+). The protein operates within cofactor biosynthesis; thiamine diphosphate biosynthesis. Functionally, catalyzes the ATP-dependent transfer of a sulfur to tRNA to produce 4-thiouridine in position 8 of tRNAs, which functions as a near-UV photosensor. Also catalyzes the transfer of sulfur to the sulfur carrier protein ThiS, forming ThiS-thiocarboxylate. This is a step in the synthesis of thiazole, in the thiamine biosynthesis pathway. The sulfur is donated as persulfide by IscS. The sequence is that of Probable tRNA sulfurtransferase from Lachnoclostridium phytofermentans (strain ATCC 700394 / DSM 18823 / ISDg) (Clostridium phytofermentans).